The following is a 250-amino-acid chain: Global transcriptional regulator CodY (250 aa).

The interval 1 to 146 (MTLLEKTRKL…GATVVGLEIL (146 aa)) is GAF domain. The H-T-H motif DNA-binding region spans 194 to 213 (ASKIADKVGITRSVIVNALR).

Belongs to the CodY family.

The protein localises to the cytoplasm. DNA-binding global transcriptional regulator which is involved in the adaptive response to starvation and acts by directly or indirectly controlling the expression of numerous genes in response to nutrient availability. During rapid exponential growth, CodY is highly active and represses genes whose products allow adaptation to nutrient depletion. This chain is Global transcriptional regulator CodY, found in Caldanaerobacter subterraneus subsp. tengcongensis (strain DSM 15242 / JCM 11007 / NBRC 100824 / MB4) (Thermoanaerobacter tengcongensis).